The following is a 49-amino-acid chain: Multidrug efflux pump accessory protein AcrZ (49 aa).

At 1–7 (MLELLKS) the chain is on the periplasmic side. A helical membrane pass occupies residues 8–28 (LVFAVIMVPVVMAIILGLIYG). The Cytoplasmic portion of the chain corresponds to 29–49 (LGEVFNIFSGVGKKDQPGQNH).

The protein belongs to the AcrZ family. As to quaternary structure, part of the AcrA-AcrB-AcrZ-TolC efflux pump, interacts directly with AcrB.

Its subcellular location is the cell inner membrane. AcrA-AcrB-AcrZ-TolC is a drug efflux protein complex with a broad substrate specificity. This protein binds to AcrB and is required for efflux of some but not all substrates, suggesting it may influence the specificity of drug export. The chain is Multidrug efflux pump accessory protein AcrZ from Escherichia coli O157:H7.